Reading from the N-terminus, the 834-residue chain is Probable phosphoenolpyruvate synthase (834 aa).

Catalysis depends on H447, which acts as the Tele-phosphohistidine intermediate. Substrate contacts are provided by R550, R598, E699, G720, S721, N722, and D723. E699 is a binding site for Mg(2+). Mg(2+) is bound at residue D723. C772 acts as the Proton donor in catalysis.

Belongs to the PEP-utilizing enzyme family. As to quaternary structure, homooligomer. Forms a large complex of about 2000 kDa. The cofactor is Mg(2+). In terms of processing, the N-terminus is blocked.

The catalysed reaction is pyruvate + ATP + H2O = phosphoenolpyruvate + AMP + phosphate + 2 H(+). The protein operates within carbohydrate biosynthesis; gluconeogenesis. Catalyzes the phosphorylation of pyruvate to phosphoenolpyruvate. This Staphylothermus marinus (strain ATCC 43588 / DSM 3639 / JCM 9404 / F1) protein is Probable phosphoenolpyruvate synthase (ppsA).